A 3707-amino-acid chain; its full sequence is CUB and sushi domain-containing protein 3 (3707 aa).

The segment at methionine 1–lysine 21 is disordered. At methionine 1–serine 42 the chain is on the cytoplasmic side. The helical transmembrane segment at glycine 43–tyrosine 63 threads the bilayer. Residues threonine 64 to serine 3630 are Extracellular-facing. 4 cysteine pairs are disulfide-bonded: cysteine 65–cysteine 91, cysteine 178–cysteine 218, cysteine 204–cysteine 235, and cysteine 241–cysteine 267. In terms of domain architecture, CUB 1 spans cysteine 65–leucine 173. N-linked (GlcNAc...) asparagine glycosylation is found at asparagine 73 and asparagine 90. One can recognise a Sushi 1 domain in the interval serine 176–alanine 237. Residues cysteine 241–serine 345 form the CUB 2 domain. 2 N-linked (GlcNAc...) asparagine glycosylation sites follow: asparagine 361 and asparagine 409. The disordered stretch occupies residues glutamine 394–isoleucine 435. Residues valine 396–aspartate 413 show a composition bias toward polar residues. Residues asparagine 484–valine 545 form the Sushi 2 domain. Cystine bridges form between cysteine 486–cysteine 526, cysteine 512–cysteine 543, cysteine 548–cysteine 574, cysteine 664–cysteine 704, cysteine 690–cysteine 717, and cysteine 721–cysteine 747. Residues cysteine 548 to isoleucine 659 enclose the CUB 3 domain. The region spanning glutamate 662–phenylalanine 719 is the Sushi 3 domain. Residues cysteine 721–phenylalanine 829 form the CUB 4 domain. N-linked (GlcNAc...) asparagine glycans are attached at residues asparagine 724 and asparagine 823. The Sushi 4 domain occupies asparagine 832 to alanine 893. 3 disulfides stabilise this stretch: cysteine 834–cysteine 875, cysteine 860–cysteine 891, and cysteine 895–cysteine 921. One can recognise a CUB 5 domain in the interval cysteine 895–valine 1003. N-linked (GlcNAc...) asparagine glycosylation occurs at asparagine 966. Residues tyrosine 1008–alanine 1065 form the Sushi 5 domain. Disulfide bonds link cysteine 1010–cysteine 1050, cysteine 1036–cysteine 1063, and cysteine 1067–cysteine 1093. One can recognise a CUB 6 domain in the interval cysteine 1067 to tyrosine 1177. N-linked (GlcNAc...) asparagine glycans are attached at residues asparagine 1092, asparagine 1126, and asparagine 1171. The 60-residue stretch at glutamate 1180 to alanine 1239 folds into the Sushi 6 domain. Disulfide bonds link cysteine 1182/cysteine 1222, cysteine 1208/cysteine 1237, and cysteine 1241/cysteine 1267. In terms of domain architecture, CUB 7 spans cysteine 1241–phenylalanine 1349. Asparagine 1280 is a glycosylation site (N-linked (GlcNAc...) asparagine). A Sushi 7 domain is found at serine 1352–alanine 1412. 12 disulfide bridges follow: cysteine 1354/cysteine 1395, cysteine 1381/cysteine 1410, cysteine 1414/cysteine 1441, cysteine 1528/cysteine 1568, cysteine 1554/cysteine 1584, cysteine 1588/cysteine 1614, cysteine 1701/cysteine 1741, cysteine 1727/cysteine 1758, cysteine 1762/cysteine 1788, cysteine 1878/cysteine 1918, cysteine 1904/cysteine 1935, and cysteine 1939/cysteine 1965. Residues cysteine 1414–serine 1523 enclose the CUB 8 domain. The Sushi 8 domain maps to threonine 1526 to alanine 1586. A glycan (N-linked (GlcNAc...) asparagine) is linked at asparagine 1536. One can recognise a CUB 9 domain in the interval cysteine 1588–lysine 1696. Residues asparagine 1591 and asparagine 1709 are each glycosylated (N-linked (GlcNAc...) asparagine). The 62-residue stretch at glutamate 1699–alanine 1760 folds into the Sushi 9 domain. The CUB 10 domain occupies cysteine 1762–valine 1870. N-linked (GlcNAc...) asparagine glycosylation occurs at asparagine 1781. Residues threonine 1876–valine 1937 form the Sushi 10 domain. Asparagine 1929 carries N-linked (GlcNAc...) asparagine glycosylation. Positions cysteine 1939–isoleucine 2047 constitute a CUB 11 domain. N-linked (GlcNAc...) asparagine glycosylation occurs at asparagine 2019. The Sushi 11 domain maps to aspartate 2050 to alanine 2109. 3 disulfide bridges follow: cysteine 2052–cysteine 2092, cysteine 2078–cysteine 2107, and cysteine 2111–cysteine 2137. One can recognise a CUB 12 domain in the interval cysteine 2111–tyrosine 2219. A glycan (N-linked (GlcNAc...) asparagine) is linked at asparagine 2155. The Sushi 12 domain maps to glutamine 2222 to alanine 2281. Intrachain disulfides connect cysteine 2224–cysteine 2264, cysteine 2250–cysteine 2279, and cysteine 2283–cysteine 2309. Residues cysteine 2283–valine 2394 form the CUB 13 domain. N-linked (GlcNAc...) asparagine glycans are attached at residues asparagine 2286, asparagine 2291, and asparagine 2324. Residues arginine 2393–valine 2454 enclose the Sushi 13 domain. Cystine bridges form between cysteine 2395–cysteine 2437, cysteine 2423–cysteine 2452, and cysteine 2456–cysteine 2484. The CUB 14 domain maps to cysteine 2456–phenylalanine 2567. 2 N-linked (GlcNAc...) asparagine glycosylation sites follow: asparagine 2495 and asparagine 2537. 15 Sushi domains span residues phenylalanine 2567–alanine 2629, isoleucine 2630–valine 2691, valine 2692–isoleucine 2756, isoleucine 2757–alanine 2814, glycine 2815–proline 2872, valine 2873–valine 2930, valine 2931–methionine 2992, isoleucine 2993–glycine 3050, glycine 3054–alanine 3111, valine 3112–isoleucine 3170, isoleucine 3171–alanine 3230, valine 3231–proline 3288, lysine 3289–glutamate 3346, threonine 3350–proline 3408, and histidine 3409–alanine 3468. Cystine bridges form between cysteine 2569-cysteine 2610, cysteine 2596-cysteine 2627, cysteine 2632-cysteine 2674, cysteine 2658-cysteine 2689, cysteine 2694-cysteine 2739, cysteine 2725-cysteine 2754, cysteine 2759-cysteine 2799, cysteine 2785-cysteine 2812, cysteine 2817-cysteine 2857, cysteine 2843-cysteine 2870, cysteine 2875-cysteine 2915, and cysteine 2901-cysteine 2928. 2 N-linked (GlcNAc...) asparagine glycosylation sites follow: asparagine 2711 and asparagine 2742. The N-linked (GlcNAc...) asparagine glycan is linked to asparagine 2862. N-linked (GlcNAc...) asparagine glycans are attached at residues asparagine 2932 and asparagine 2952. 18 cysteine pairs are disulfide-bonded: cysteine 2933–cysteine 2977, cysteine 2963–cysteine 2990, cysteine 2995–cysteine 3035, cysteine 3021–cysteine 3048, cysteine 3056–cysteine 3096, cysteine 3082–cysteine 3109, cysteine 3114–cysteine 3155, cysteine 3141–cysteine 3168, cysteine 3173–cysteine 3215, cysteine 3199–cysteine 3228, cysteine 3233–cysteine 3273, cysteine 3259–cysteine 3286, cysteine 3291–cysteine 3331, cysteine 3317–cysteine 3344, cysteine 3352–cysteine 3393, cysteine 3379–cysteine 3406, cysteine 3411–cysteine 3453, and cysteine 3438–cysteine 3466. N-linked (GlcNAc...) asparagine glycosylation occurs at asparagine 3099. N-linked (GlcNAc...) asparagine glycosylation is found at asparagine 3158, asparagine 3167, asparagine 3194, asparagine 3208, and asparagine 3218. N-linked (GlcNAc...) asparagine glycosylation occurs at asparagine 3276. Asparagine 3364 carries N-linked (GlcNAc...) asparagine glycosylation. Residues asparagine 3522, asparagine 3529, asparagine 3612, asparagine 3618, and asparagine 3627 are each glycosylated (N-linked (GlcNAc...) asparagine). Residues valine 3631–leucine 3651 form a helical membrane-spanning segment. Over tyrosine 3652–valine 3707 the chain is Cytoplasmic.

It belongs to the CSMD family. Weakly expressed in most tissues, except in brain. Expressed at intermediate level in brain, including cerebellum, substantia nigra, thalamus, spinal cord, hippocampus and fetal brain. Also expressed in testis.

The protein localises to the cell membrane. In terms of biological role, involved in dendrite development. This is CUB and sushi domain-containing protein 3 (CSMD3) from Homo sapiens (Human).